A 224-amino-acid chain; its full sequence is uncharacterized protein (224 aa).

The tract at residues 128-224 is disordered; the sequence is VPSVQLHQIP…TNKRKKRLQF (97 aa). The span at 129 to 138 shows a compositional bias: polar residues; it reads PSVQLHQIPT. Basic residues predominate over residues 139-156; it reads RSRRSSKPRKPRKKRKER. Over residues 167–182 the composition is skewed to basic and acidic residues; it reads LLREMDRLMTKQRDAL. Over residues 185–195 the composition is skewed to low complexity; the sequence is SESSSYFSSDS.

This is an uncharacterized protein from Torque teno sus virus 1 (isolate Sd-TTV31).